We begin with the raw amino-acid sequence, 125 residues long: Putative RNA polymerase sigma-G factor (125 aa).

Belongs to the sigma-70 factor family.

Sigma factors are initiation factors that promote the attachment of RNA polymerase to specific initiation sites and are then released. This is Putative RNA polymerase sigma-G factor from Bacillus thuringiensis subsp. kurstaki.